We begin with the raw amino-acid sequence, 283 residues long: Zinc finger protein 691 (283 aa).

The segment covering 1-41 (MGSEKEQRPEAHLPEEGEGAKPWRVDGSKDSQITPREDHGQ) has biased composition (basic and acidic residues). The tract at residues 1 to 68 (MGSEKEQRPE…KVTAQAGGPG (68 aa)) is disordered. The residue at position 43 (Ser-43) is a Phosphoserine. Lys-81 participates in a covalent cross-link: Glycyl lysine isopeptide (Lys-Gly) (interchain with G-Cter in SUMO2). 7 C2H2-type zinc fingers span residues 83–105 (FICA…QRIH), 111–133 (YKCS…ERIH), 139–161 (YQCA…QQDH), 167–189 (YRCD…HRTH), 195–217 (YICC…HRTH), 223–245 (YECT…QRTH), and 251–273 (YRCT…QKTH).

This sequence belongs to the krueppel C2H2-type zinc-finger protein family.

Its subcellular location is the nucleus. In terms of biological role, may be involved in transcriptional regulation. This chain is Zinc finger protein 691 (Znf691), found in Mus musculus (Mouse).